The chain runs to 692 residues: Hexamerin-1.1 (692 aa).

An N-terminal signal peptide occupies residues 1–18 (MKLLILAVAISLAVLASG). The N-linked (GlcNAc...) asparagine glycan is linked to Asn-203.

It belongs to the hemocyanin family. In terms of assembly, homohexamer. As to expression, larval fat body.

Its subcellular location is the secreted. It localises to the extracellular space. Larval storage protein (LSP) which may serve as a store of amino acids for synthesis of adult proteins. This chain is Hexamerin-1.1 (HexA), found in Anopheles gambiae (African malaria mosquito).